We begin with the raw amino-acid sequence, 313 residues long: Probable GTP 3',8-cyclase (313 aa).

The Radical SAM core domain maps to 4–224 (RFGRSIEDLR…EIRSKHYRPR (221 aa)). Arginine 13 contributes to the GTP binding site. [4Fe-4S] cluster is bound by residues cysteine 20, cysteine 24, and cysteine 27. Lysine 60 serves as a coordination point for GTP. Glycine 64 serves as a coordination point for S-adenosyl-L-methionine. A GTP-binding site is contributed by threonine 90. Serine 114 is an S-adenosyl-L-methionine binding site. GTP is bound at residue lysine 151. 2 residues coordinate [4Fe-4S] cluster: cysteine 244 and cysteine 247. Residue 249–251 (RIR) participates in GTP binding. Cysteine 261 is a [4Fe-4S] cluster binding site.

This sequence belongs to the radical SAM superfamily. MoaA family. Requires [4Fe-4S] cluster as cofactor.

It catalyses the reaction GTP + AH2 + S-adenosyl-L-methionine = (8S)-3',8-cyclo-7,8-dihydroguanosine 5'-triphosphate + 5'-deoxyadenosine + L-methionine + A + H(+). Its pathway is cofactor biosynthesis; molybdopterin biosynthesis. In terms of biological role, catalyzes the cyclization of GTP to (8S)-3',8-cyclo-7,8-dihydroguanosine 5'-triphosphate. The protein is Probable GTP 3',8-cyclase of Sulfurisphaera tokodaii (strain DSM 16993 / JCM 10545 / NBRC 100140 / 7) (Sulfolobus tokodaii).